A 335-amino-acid polypeptide reads, in one-letter code: N-acetyl-gamma-glutamyl-phosphate reductase (335 aa).

Cysteine 156 is an active-site residue.

It belongs to the NAGSA dehydrogenase family. Type 1 subfamily.

Its subcellular location is the cytoplasm. It carries out the reaction N-acetyl-L-glutamate 5-semialdehyde + phosphate + NADP(+) = N-acetyl-L-glutamyl 5-phosphate + NADPH + H(+). It participates in amino-acid biosynthesis; L-arginine biosynthesis; N(2)-acetyl-L-ornithine from L-glutamate: step 3/4. In terms of biological role, catalyzes the NADPH-dependent reduction of N-acetyl-5-glutamyl phosphate to yield N-acetyl-L-glutamate 5-semialdehyde. In Tolumonas auensis (strain DSM 9187 / NBRC 110442 / TA 4), this protein is N-acetyl-gamma-glutamyl-phosphate reductase.